The primary structure comprises 2259 residues: Putative Polycomb group protein ASXL3 (2259 aa).

The 74-residue stretch at 10-83 (RTWAEAARLA…KSGLYALRKE (74 aa)) folds into the HTH HARE-type domain. Residues 181 to 230 (VVLTPLKVSDEQSDSPSGSESKNGEADSSDKEMKHGQKSPTGKQTSQHLK) form a disordered region. A compositionally biased stretch (basic and acidic residues) spans 202 to 215 (KNGEADSSDKEMKH). Positions 218 to 227 (KSPTGKQTSQ) are enriched in polar residues. A DEUBAD domain is found at 253–362 (PGSILVNTNL…FERFYGERSG (110 aa)). 10 disordered regions span residues 364–399 (SREESIKLTSGPNHEGAEGSSSHGDSGIPGPSAQNA), 607–643 (CISETSFSSESPEGACASLPSPGGETQSTSEESCTPA), 703–810 (EASP…IPEP), 857–1012 (SEMT…PLKI), 1025–1049 (SQPVSKAESRASTSTSVSSGRNTGA), 1126–1150 (RLPSVSTKEDSLNMEASPTPETKME), 1433–1462 (LSGENLDNNSGPLNRTDNSEKPQQPAGGFV), 1614–1643 (DPMRNTAPPVVSHSSSSKQKEHPEQTGLKA), 1687–1719 (DFPGPERPPPVTEVTSSASVQPTQTMKPSTTSP), and 1993–2075 (NMLS…TTKR). Polar residues-rich tracts occupy residues 607–617 (CISETSFSSES), 630–643 (GETQSTSEESCTPA), and 703–717 (EASPVSNLPLTSEAS). Residues 722 to 741 (LPPTSETSSESSMPLTSETP) show a composition bias toward low complexity. 2 stretches are compositionally biased toward polar residues: residues 770–781 (KSPSGSEEANSP) and 926–945 (QSSTLNRLETSHTSKVSEPS). 2 stretches are compositionally biased toward basic and acidic residues: residues 949-985 (DGIRNDNRESEISKRKTVEHSFGICKEKRARIEDDQS) and 995-1006 (PEKEQPPREEPR). Residues 1034–1043 (RASTSTSVSS) are compositionally biased toward low complexity. A compositionally biased stretch (polar residues) spans 1437–1448 (NLDNNSGPLNRT). A compositionally biased stretch (polar residues) spans 1699 to 1719 (EVTSSASVQPTQTMKPSTTSP). The segment covering 2023–2055 (PLPPPPPPPPPPPPPLALPPPPPPPPPLPPPLP) has biased composition (pro residues). A PHD-type; atypical zinc finger spans residues 2221–2258 (ELKCSCRLKAMIVCKGCGAFCHDDCIGPSKLCVACLVV).

It belongs to the Asx family. In terms of assembly, core component of the polycomb repressive deubiquitinase (PR-DUB) complex, at least composed of BAP1, one of ASXL1, ASXL2 or (probably) ASXL3, and one of MBD5 or MBD6. Distinct combinations of ASXL and MBD proteins may preferentially bind specific histone modification marks. The PR-DUB core associates with a number of accessory proteins, including FOXK1, FOXK2, KDM1B, HCFC1 and OGT; KDM1B specifically associates with ASXL2 PR-DUB complexes. Interacts (via PHD domain) with MBD5 and MBD6 (via MBD domain); the interaction is probably direct and mediates association of MBD proteins with the PR-DUB core.

The protein resides in the nucleus. Putative Polycomb group (PcG) protein. PcG proteins act by forming multiprotein complexes, which are required to maintain the transcriptionally repressive state of homeotic genes throughout development. PcG proteins are not required to initiate repression, but to maintain it during later stages of development. They probably act via methylation of histones, rendering chromatin heritably changed in its expressibility. Non-catalytic component of the PR-DUB complex, a complex that specifically mediates deubiquitination of histone H2A monoubiquitinated at 'Lys-119' (H2AK119ub1). The PR-DUB complex is an epigenetic regulator of gene expression and acts as a transcriptional coactivator, affecting genes involved in development, cell communication, signaling, cell proliferation and cell viability. ASXL1, ASXL2 and ASXL3 function redundantly in the PR-DUB complex and are essential for chromatin recruitment and transcriptional activation of associated genes. This chain is Putative Polycomb group protein ASXL3 (Asxl3), found in Mus musculus (Mouse).